The following is a 748-amino-acid chain: Photosystem I P700 chlorophyll a apoprotein A1 (748 aa).

Helical transmembrane passes span 70–93, 156–179, 195–219, 291–309, 346–369, 385–411, 433–455, and 530–548; these read VFSA…FHGA, LYST…YHYH, LNHH…HVSL, TAHH…GHQY, WHAQ…HHMY, LSLF…IFLV, AIIS…LYIH, and FLVH…LILL. Cysteine 572 and cysteine 581 together coordinate [4Fe-4S] cluster. 2 helical membrane-spanning segments follow: residues 588 to 609 and 662 to 684; these read HVFL…HFSW and LSAY…MFLF. Histidine 673 provides a ligand contact to chlorophyll a'. Chlorophyll a-binding residues include methionine 681 and tyrosine 689. Tryptophan 690 contacts phylloquinone. Residues 722–742 form a helical membrane-spanning segment; it reads AVGVAHYLLGGIATTWAFFLA.

The protein belongs to the PsaA/PsaB family. The PsaA/B heterodimer binds the P700 chlorophyll special pair and subsequent electron acceptors. PSI consists of a core antenna complex that captures photons, and an electron transfer chain that converts photonic excitation into a charge separation. The eukaryotic PSI reaction center is composed of at least 11 subunits. P700 is a chlorophyll a/chlorophyll a' dimer, A0 is one or more chlorophyll a, A1 is one or both phylloquinones and FX is a shared 4Fe-4S iron-sulfur center. is required as a cofactor.

It localises to the plastid. It is found in the chloroplast thylakoid membrane. The enzyme catalyses reduced [plastocyanin] + hnu + oxidized [2Fe-2S]-[ferredoxin] = oxidized [plastocyanin] + reduced [2Fe-2S]-[ferredoxin]. Its function is as follows. PsaA and PsaB bind P700, the primary electron donor of photosystem I (PSI), as well as the electron acceptors A0, A1 and FX. PSI is a plastocyanin-ferredoxin oxidoreductase, converting photonic excitation into a charge separation, which transfers an electron from the donor P700 chlorophyll pair to the spectroscopically characterized acceptors A0, A1, FX, FA and FB in turn. Oxidized P700 is reduced on the lumenal side of the thylakoid membrane by plastocyanin. This Chaetosphaeridium globosum (Charophycean green alga) protein is Photosystem I P700 chlorophyll a apoprotein A1.